Consider the following 226-residue polypeptide: Urease accessory protein UreF (226 aa).

The protein belongs to the UreF family. In terms of assembly, ureD, UreF and UreG form a complex that acts as a GTP-hydrolysis-dependent molecular chaperone, activating the urease apoprotein by helping to assemble the nickel containing metallocenter of UreC. The UreE protein probably delivers the nickel.

It localises to the cytoplasm. Functionally, required for maturation of urease via the functional incorporation of the urease nickel metallocenter. In Burkholderia ambifaria (strain ATCC BAA-244 / DSM 16087 / CCUG 44356 / LMG 19182 / AMMD) (Burkholderia cepacia (strain AMMD)), this protein is Urease accessory protein UreF.